Reading from the N-terminus, the 493-residue chain is MEKYFDRLEKEPLIAERWKKIEELESYGIKPFGKKYDKQIMIGDILKHKPEENLKFKTAGRIMSLRGKGKVYFAHIEDQSGKIQIYIKKDELGEEQFDHIVKMLNVGDIIGLEGELFITHTEELTLRVKSIALLTKNVRSLPEKYHGLTDVEIRYRKRYVDLIMNPEVRETFIKRTKIIKAIRKYLDDRGFLEVETPIMHPILGGAAAKPFITHHNTLNIDLFLRIAPELYLKKLIVGGFERVYDLNRNFRNEGISTRHNPEFTMVELYQAHADFNDMMDLCEGIISSVCQEINGTTDIEYDGVQLSLKNFNRVHMVDMIKEVTGVDFWKEMTFEEAKKLAKEHHVEVADHMNSVGHIINEFFEQKCEEKVIQPTFVYGHPVEISPLAKRNEDNPNFTDRFELFINKREYANAFTELNDPADQRGRFEAQVEEAMRGNEEATPEIDESFVEALEYGLPPTGGMGIGIDRLVMLLTGAPSIRDVILFPQMKPRD.

Residues glutamate 402 and glutamate 409 each contribute to the Mg(2+) site.

The protein belongs to the class-II aminoacyl-tRNA synthetase family. As to quaternary structure, homodimer. Mg(2+) is required as a cofactor.

Its subcellular location is the cytoplasm. It carries out the reaction tRNA(Lys) + L-lysine + ATP = L-lysyl-tRNA(Lys) + AMP + diphosphate. This Fusobacterium nucleatum subsp. nucleatum (strain ATCC 25586 / DSM 15643 / BCRC 10681 / CIP 101130 / JCM 8532 / KCTC 2640 / LMG 13131 / VPI 4355) protein is Lysine--tRNA ligase.